The sequence spans 225 residues: PKHD-type hydroxylase YbiX (225 aa).

A Fe2OG dioxygenase domain is found at 78–177 (TLSTPLFNRY…RVASFMWIQS (100 aa)). Residues H96, D98, and H158 each coordinate Fe cation. R168 provides a ligand contact to 2-oxoglutarate.

Requires Fe(2+) as cofactor. L-ascorbate serves as cofactor.

This chain is PKHD-type hydroxylase YbiX, found in Shigella dysenteriae serotype 1 (strain Sd197).